Here is a 134-residue protein sequence, read N- to C-terminus: Small ribosomal subunit protein bS16 (134 aa).

A disordered region spans residues 81-134; the sequence is LAKRPARSNPKKAEPGKKAQERLAAARQAEEEAKAAAEAAAAAPAEAPAEEAAS. Basic and acidic residues predominate over residues 91–101; it reads KKAEPGKKAQE. Residues 116–134 show a composition bias toward low complexity; sequence AAEAAAAAPAEAPAEEAAS.

The protein belongs to the bacterial ribosomal protein bS16 family.

The polypeptide is Small ribosomal subunit protein bS16 (Chelativorans sp. (strain BNC1)).